The following is a 224-amino-acid chain: 2-C-methyl-D-erythritol 4-phosphate cytidylyltransferase (224 aa).

Belongs to the IspD/TarI cytidylyltransferase family. IspD subfamily.

The enzyme catalyses 2-C-methyl-D-erythritol 4-phosphate + CTP + H(+) = 4-CDP-2-C-methyl-D-erythritol + diphosphate. It functions in the pathway isoprenoid biosynthesis; isopentenyl diphosphate biosynthesis via DXP pathway; isopentenyl diphosphate from 1-deoxy-D-xylulose 5-phosphate: step 2/6. Its function is as follows. Catalyzes the formation of 4-diphosphocytidyl-2-C-methyl-D-erythritol from CTP and 2-C-methyl-D-erythritol 4-phosphate (MEP). This is 2-C-methyl-D-erythritol 4-phosphate cytidylyltransferase from Clostridium botulinum (strain Eklund 17B / Type B).